Consider the following 287-residue polypeptide: ATP synthase gamma chain (287 aa).

This sequence belongs to the ATPase gamma chain family. As to quaternary structure, F-type ATPases have 2 components, CF(1) - the catalytic core - and CF(0) - the membrane proton channel. CF(1) has five subunits: alpha(3), beta(3), gamma(1), delta(1), epsilon(1). CF(0) has three main subunits: a, b and c.

It localises to the cell inner membrane. In terms of biological role, produces ATP from ADP in the presence of a proton gradient across the membrane. The gamma chain is believed to be important in regulating ATPase activity and the flow of protons through the CF(0) complex. This Parabacteroides distasonis (strain ATCC 8503 / DSM 20701 / CIP 104284 / JCM 5825 / NCTC 11152) protein is ATP synthase gamma chain.